The following is an 895-amino-acid chain: Pyruvate dehydrogenase E1 component (895 aa).

The disordered stretch occupies residues 1-20 (MSAVPEQILGASSANDADPQ).

As to quaternary structure, homodimer. Part of the PDH complex, consisting of multiple copies of pyruvate dehydrogenase (E1), dihydrolipoamide acetyltransferase (E2) and lipoamide dehydrogenase (E3). The cofactor is thiamine diphosphate.

The enzyme catalyses N(6)-[(R)-lipoyl]-L-lysyl-[protein] + pyruvate + H(+) = N(6)-[(R)-S(8)-acetyldihydrolipoyl]-L-lysyl-[protein] + CO2. In terms of biological role, component of the pyruvate dehydrogenase (PDH) complex, that catalyzes the overall conversion of pyruvate to acetyl-CoA and CO(2). The sequence is that of Pyruvate dehydrogenase E1 component (pdhA) from Cupriavidus necator (strain ATCC 17699 / DSM 428 / KCTC 22496 / NCIMB 10442 / H16 / Stanier 337) (Ralstonia eutropha).